A 235-amino-acid polypeptide reads, in one-letter code: 2,3,4,5-tetrahydropyridine-2,6-dicarboxylate N-acetyltransferase (235 aa).

The protein belongs to the transferase hexapeptide repeat family. DapH subfamily.

It carries out the reaction (S)-2,3,4,5-tetrahydrodipicolinate + acetyl-CoA + H2O = L-2-acetamido-6-oxoheptanedioate + CoA. It participates in amino-acid biosynthesis; L-lysine biosynthesis via DAP pathway; LL-2,6-diaminopimelate from (S)-tetrahydrodipicolinate (acetylase route): step 1/3. Functionally, catalyzes the transfer of an acetyl group from acetyl-CoA to tetrahydrodipicolinate. This Exiguobacterium sp. (strain ATCC BAA-1283 / AT1b) protein is 2,3,4,5-tetrahydropyridine-2,6-dicarboxylate N-acetyltransferase.